The chain runs to 143 residues: Peptide methionine sulfoxide reductase MsrB (143 aa).

Residues Asp-16 to Lys-139 form the MsrB domain. Residues Cys-55, Cys-58, Cys-104, and Cys-107 each coordinate Zn(2+). Catalysis depends on Cys-128, which acts as the Nucleophile.

The protein belongs to the MsrB Met sulfoxide reductase family. Requires Zn(2+) as cofactor.

The enzyme catalyses L-methionyl-[protein] + [thioredoxin]-disulfide + H2O = L-methionyl-(R)-S-oxide-[protein] + [thioredoxin]-dithiol. In Burkholderia thailandensis (strain ATCC 700388 / DSM 13276 / CCUG 48851 / CIP 106301 / E264), this protein is Peptide methionine sulfoxide reductase MsrB.